A 119-amino-acid chain; its full sequence is Fluoride-specific ion channel FluC 1 (119 aa).

4 helical membrane passes run 2-22, 37-57, 62-82, and 99-119; these read TGAVAPPAVLVAAGGALGAVL, AGTLVVNVVGSFVLAALTFAA, TMLLFGTGACGAFTTFASFSV, and HALGNLLGAGLAVALAWLLVA. The Na(+) site is built by glycine 72 and threonine 75.

The protein belongs to the fluoride channel Fluc/FEX (TC 1.A.43) family.

Its subcellular location is the cell membrane. It catalyses the reaction fluoride(in) = fluoride(out). With respect to regulation, na(+) is not transported, but it plays an essential structural role and its presence is essential for fluoride channel function. In terms of biological role, fluoride-specific ion channel. Important for reducing fluoride concentration in the cell, thus reducing its toxicity. The chain is Fluoride-specific ion channel FluC 1 from Halobacterium salinarum (strain ATCC 700922 / JCM 11081 / NRC-1) (Halobacterium halobium).